A 465-amino-acid polypeptide reads, in one-letter code: Ribosomal oxygenase 2 (465 aa).

A JmjC domain is found at 139–271 (QPQRYKDELW…NSWGDCLLDS (133 aa)). Fe cation is bound by residues H179, D181, and H240. S309 is modified (phosphoserine).

The protein belongs to the ROX family. MINA53 subfamily. Fe(2+) is required as a cofactor. Predominantly expressed in testis. Expressed at high levels in spleen, thymus, and colon, but barely detectable in brain, skeletal muscle, and seminal vesicle (at protein level).

It localises to the nucleus. It is found in the nucleolus. It carries out the reaction L-histidyl-[ribosomal protein uL15] + 2-oxoglutarate + O2 = (3S)-3-hydroxy-L-histidyl-[ribosomal protein uL15] + succinate + CO2. The catalysed reaction is L-histidyl-[protein] + 2-oxoglutarate + O2 = (3S)-3-hydroxy-L-histidyl-[protein] + succinate + CO2. Functionally, oxygenase that can act as both a histone lysine demethylase and a ribosomal histidine hydroxylase. Is involved in the demethylation of trimethylated 'Lys-9' on histone H3 (H3K9me3), leading to an increase in ribosomal RNA expression. Also catalyzes the hydroxylation of 60S ribosomal protein L27a on 'His-39'. May play an important role in cell growth and survival. May be involved in ribosome biogenesis, most likely during the assembly process of pre-ribosomal particles. This chain is Ribosomal oxygenase 2, found in Mus musculus (Mouse).